The primary structure comprises 192 residues: Small ribosomal subunit protein eS7 (192 aa).

This sequence belongs to the eukaryotic ribosomal protein eS7 family.

The sequence is that of Small ribosomal subunit protein eS7 (RpS7) from Culex quinquefasciatus (Southern house mosquito).